The following is a 933-amino-acid chain: Dual 3',5'-cyclic-AMP and -GMP phosphodiesterase 11A (933 aa).

The disordered stretch occupies residues 42-121 (HTSGQGASSL…LQRRASQKEL (80 aa)). Residues Ser162, Ser163, and Ser239 each carry the phosphoserine modification. GAF domains follow at residues 217–370 (DLTS…GIAI) and 402–558 (DLEK…GLGI). Ser424 is a binding site for 3',5'-cyclic GMP. One can recognise a PDEase domain in the interval 588 to 912 (SKAEVDKFKA…RKWEELHQKR (325 aa)). The active-site Proton donor is His664. A divalent metal cation is bound by residues His668, His704, Asp705, and Asp816. The tract at residues 913 to 933 (LQVSAASPDPASPMVAGEDRL) is disordered.

The protein belongs to the cyclic nucleotide phosphodiesterase family. A divalent metal cation is required as a cofactor. In terms of tissue distribution, expressed in testis and developing spermatoza.

It localises to the cytoplasm. It is found in the cytosol. It carries out the reaction 3',5'-cyclic GMP + H2O = GMP + H(+). It catalyses the reaction 3',5'-cyclic AMP + H2O = AMP + H(+). Inhibited by 3-isobutyl-1-methylxanthine (IBMX), zaprinast and dipyridamole. cGMP acts as an allosteric activator. Functionally, plays a role in signal transduction by regulating the intracellular concentration of cyclic nucleotides cAMP and cGMP. Catalyzes the hydrolysis of both cAMP and cGMP to 5'-AMP and 5'-GMP, respectively. The protein is Dual 3',5'-cyclic-AMP and -GMP phosphodiesterase 11A (Pde11a) of Mus musculus (Mouse).